A 405-amino-acid polypeptide reads, in one-letter code: Deoxyguanosinetriphosphate triphosphohydrolase-like protein (405 aa).

Positions 75–219 (RLTHTIEVAQ…AAIADDIAYN (145 aa)) constitute an HD domain.

Belongs to the dGTPase family. Type 2 subfamily.

This Rhizobium leguminosarum bv. trifolii (strain WSM2304) protein is Deoxyguanosinetriphosphate triphosphohydrolase-like protein.